We begin with the raw amino-acid sequence, 199 residues long: Recombination protein RecR (199 aa).

The segment at 58–73 (CSACGNVDTQDPCAIC) adopts a C4-type zinc-finger fold. In terms of domain architecture, Toprim spans 81 to 176 (HILCIVEEVG…SVSRLAHGVP (96 aa)).

The protein belongs to the RecR family.

Functionally, may play a role in DNA repair. It seems to be involved in an RecBC-independent recombinational process of DNA repair. It may act with RecF and RecO. This is Recombination protein RecR from Parvibaculum lavamentivorans (strain DS-1 / DSM 13023 / NCIMB 13966).